The following is a 253-amino-acid chain: 5'-nucleotidase SurE (253 aa).

The a divalent metal cation site is built by D8, D9, S39, and N92.

This sequence belongs to the SurE nucleotidase family. A divalent metal cation is required as a cofactor.

The protein localises to the cytoplasm. It catalyses the reaction a ribonucleoside 5'-phosphate + H2O = a ribonucleoside + phosphate. Nucleotidase that shows phosphatase activity on nucleoside 5'-monophosphates. This Burkholderia pseudomallei (strain 668) protein is 5'-nucleotidase SurE.